Here is an 81-residue protein sequence, read N- to C-terminus: Cytotoxin 4 (81 aa).

Positions 1-21 (MKTLLLTLVVVTIVCLDLGYT) are cleaved as a signal peptide. Intrachain disulfides connect C24-C42, C35-C59, C63-C74, and C75-C80.

This sequence belongs to the three-finger toxin family. Short-chain subfamily. Type IA cytotoxin sub-subfamily. Monomer in solution; Homodimer and oligomer in the presence of negatively charged lipids forming a pore with a size ranging between 20 and 30 Angstroms. As to expression, expressed by the venom gland.

The protein resides in the secreted. It localises to the target cell membrane. Basic protein that bind to cell membrane and depolarizes cardiomyocytes. This cytotoxin also shows lytic activities, but 2-fold more important than that of CTX-A2. It binds to the integrin alpha-V/beta-3 with a moderate affinity. Inhibits protein kinase C. It may interact with sulfatides in the cell membrane, which induces pore formation and cell internalization and is responsible for cytotoxicity in cardiomyocytes. It may also target the mitochondrial membrane and induces mitochondrial swelling and fragmentation. In Naja atra (Chinese cobra), this protein is Cytotoxin 4.